Consider the following 732-residue polypeptide: Aldehyde oxidoreductase molybdenum-binding subunit PaoC (732 aa).

Residues 241–242 (GF), 468–470 (IGT), 511–512 (GA), 615–621 (RILNPKT), Gln625, and 688–691 (KGVG) contribute to the Mo-molybdopterin cytosine dinucleotide site. The active-site Proton acceptor is the Glu692.

This sequence belongs to the xanthine dehydrogenase family. Heterotrimer composed of PaoA, PaoB and PaoC. Mo-molybdopterin cytosine dinucleotide is required as a cofactor.

It localises to the periplasm. It catalyses the reaction an aldehyde + A + H2O = a carboxylate + AH2 + H(+). Its activity is regulated as follows. The complex requires PaoD for activity. Functionally, oxidizes aldehydes to the corresponding carboxylic acids with a preference for aromatic aldehydes. It might play a role in the detoxification of aldehydes to avoid cell damage. This Escherichia coli (strain K12) protein is Aldehyde oxidoreductase molybdenum-binding subunit PaoC.